The chain runs to 339 residues: Immunoglobulin-binding protein 1 (339 aa).

Ala2 bears the N-acetylalanine mark. The region spanning 46–60 (LDLLEKAAEMLSQLD) is the UIM domain. Residues 98-202 (RLDHLQRARE…YLLHLQRWID (105 aa)) form an interaction with PPP2CA region. 2 disordered regions span residues 221–243 (RDSS…VKPF) and 289–339 (APEE…QNMG). The interval 225 to 290 (REASTSNSSR…PDQGIAKAAP (66 aa)) is interaction with MID1. Lys241 is modified (N6-acetyllysine). Acidic residues predominate over residues 301 to 312 (EEQEEKEEEDDE). The span at 313-329 (QTLHRAREWDDWKDTHP) shows a compositional bias: basic and acidic residues.

This sequence belongs to the IGBP1/TAP42 family. Interacts with partially folded PPP2CA, but not with the fully active protein. Interacts with PPP2CB, and with PP4 and PP6. Interacts with MID1 and MID2. Interacts with ubiquitin. In terms of processing, phosphorylated. Monoubiquitination by MID1 triggers calpain-mediated cleavage and switches IGBP1 activity from protective to destructive. Ubiquitously expressed with highest levels in heart, skeletal muscle and pancreas.

The protein resides in the cytoplasm. Associated to surface IgM-receptor; may be involved in signal transduction. Involved in regulation of the catalytic activity of the phosphatases PP2A, PP4 and PP6 by protecting their partially folded catalytic subunits from degradative polyubiquitination until they associate with regulatory subunits. The sequence is that of Immunoglobulin-binding protein 1 (IGBP1) from Homo sapiens (Human).